A 28-amino-acid chain; its full sequence is Metallothionein-like protein type 2 LSC210 (28 aa).

This sequence belongs to the metallothionein superfamily. Type 15 family.

In terms of biological role, metallothioneins have a high content of cysteine residues that bind various heavy metals. In Brassica napus (Rape), this protein is Metallothionein-like protein type 2 LSC210 (LSC210).